Reading from the N-terminus, the 596-residue chain is Nitrite reductase (596 aa).

Positions 1–29 (MRQRTPFARPGLLASAALALVLGPLAVAA) are cleaved as a signal peptide. Residues 30-76 (QEQAAPPKDPAAALEDHKTKTDNRYEPSLDNLAQQDVAALGAPEGIP) are N-terminal tail. Residue His-46 participates in heme c binding. Residues Tyr-54 and Ser-57 each coordinate heme d1. Positions 77 to 162 (ALSDAQYNEA…ANYLLLDPAA (86 aa)) constitute a Cytochrome c domain. Heme c is bound by residues Cys-94, Cys-97, His-98, Lys-108, and Tyr-122. The heme d1 site is built by Trp-138, Arg-203, His-229, Arg-232, Arg-245, Arg-272, Tyr-292, Arg-420, Gln-536, and Thr-583. The interval 163–596 (PPEFGMKEMR…NVYNTMTDTY (434 aa)) is D1-heme domain.

As to quaternary structure, homodimer. It depends on heme c as a cofactor. The cofactor is heme.

Its subcellular location is the periplasm. It catalyses the reaction nitric oxide + Fe(III)-[cytochrome c] + H2O = Fe(II)-[cytochrome c] + nitrite + 2 H(+). The enzyme catalyses A + NH4(+) + H2O = hydroxylamine + AH2 + H(+). Its function is as follows. Inactivation of this cytochrome oxidase results in the loss of nitrite and nitric oxide reductase activities, but not of nitrous oxide reductase activity. The protein is Nitrite reductase (nirS) of Paracoccus denitrificans (strain Pd 1222).